The chain runs to 70 residues: uncharacterized protein (70 aa).

This is an uncharacterized protein from Bacillus subtilis (strain 168).